Here is a 387-residue protein sequence, read N- to C-terminus: Sialic acid-binding Ig-like lectin 13 (387 aa).

An N-terminal signal peptide occupies residues 1 to 15 (MLPLLLPLLWAGALA). One can recognise an Ig-like V-type domain in the interval 16-138 (LEGIFQLEVP…KDPPLSVHVT (123 aa)). Residues 16–341 (LEGIFQLEVP…QRKSGPMAEV (326 aa)) are Extracellular-facing. Cystine bridges form between Cys-35–Cys-168, Cys-40–Cys-100, and Cys-162–Cys-211. Asn-99 carries an N-linked (GlcNAc...) asparagine glycan. Arg-118 lines the N-acetylneuraminate pocket. Positions 144-227 (PDILIPGALK…AGVTTTRTVR (84 aa)) constitute an Ig-like C2-type 1 domain. N-linked (GlcNAc...) asparagine glycosylation is found at Asn-229, Asn-236, and Asn-254. Residues 234-326 (PQNLTLTVFQ…RNPLGSQQVS (93 aa)) form the Ig-like C2-type 2 domain. Residues Cys-270 and Cys-314 are joined by a disulfide bond. The helical transmembrane segment at 342 to 362 (VLVAIGEAAVKILLLFLCLII) threads the bilayer. The Cytoplasmic segment spans residues 363–387 (LRVKSHRRKAAKAATGVEAAKVVKG).

Belongs to the immunoglobulin superfamily. SIGLEC (sialic acid binding Ig-like lectin) family.

Its subcellular location is the membrane. Its function is as follows. Putative adhesion molecule that mediates sialic-acid dependent binding to cells. The polypeptide is Sialic acid-binding Ig-like lectin 13 (SIGLEC13) (Pan troglodytes (Chimpanzee)).